The following is a 376-amino-acid chain: Cytoplasmic tRNA 2-thiolation protein 2 (376 aa).

Belongs to the CTU2/NCS2 family.

The protein resides in the cytoplasm. It functions in the pathway tRNA modification; 5-methoxycarbonylmethyl-2-thiouridine-tRNA biosynthesis. In terms of biological role, plays a central role in 2-thiolation of mcm(5)S(2)U at tRNA wobble positions of tRNA(Lys), tRNA(Glu) and tRNA(Gln). May act by forming a heterodimer with NCS6 that ligates sulfur from thiocarboxylated URM1 onto the uridine of tRNAs at wobble position. Prior mcm(5) tRNA modification by the elongator complex is required for 2-thiolation. May also be involved in protein urmylation. This is Cytoplasmic tRNA 2-thiolation protein 2 from Coccidioides immitis (strain RS) (Valley fever fungus).